The following is a 208-amino-acid chain: Small ribosomal subunit protein uS4 (208 aa).

One can recognise an S4 RNA-binding domain in the interval 97–158; it reads TRLDNVIYRM…RAQKYLCVQE (62 aa).

Belongs to the universal ribosomal protein uS4 family. As to quaternary structure, part of the 30S ribosomal subunit. Contacts protein S5. The interaction surface between S4 and S5 is involved in control of translational fidelity.

Functionally, one of the primary rRNA binding proteins, it binds directly to 16S rRNA where it nucleates assembly of the body of the 30S subunit. In terms of biological role, with S5 and S12 plays an important role in translational accuracy. In Xylella fastidiosa (strain M23), this protein is Small ribosomal subunit protein uS4.